We begin with the raw amino-acid sequence, 90 residues long: Small ribosomal subunit protein uS15 (90 aa).

This sequence belongs to the universal ribosomal protein uS15 family. In terms of assembly, part of the 30S ribosomal subunit. Forms a bridge to the 50S subunit in the 70S ribosome, contacting the 23S rRNA.

Its function is as follows. One of the primary rRNA binding proteins, it binds directly to 16S rRNA where it helps nucleate assembly of the platform of the 30S subunit by binding and bridging several RNA helices of the 16S rRNA. In terms of biological role, forms an intersubunit bridge (bridge B4) with the 23S rRNA of the 50S subunit in the ribosome. This is Small ribosomal subunit protein uS15 from Blochmanniella floridana.